Consider the following 371-residue polypeptide: Interstrand DNA cross-link repair glycosylase (371 aa).

A QXQ; important for activity motif is present at residues 37-39; sequence QAQ.

This sequence belongs to the DNA glycosylase AlkZ-like family.

Functionally, DNA glycosylase involved in the repair of interstrand DNA cross-links (ICLs), which are highly toxic DNA lesions that covalently tether the opposing strands of DNA, thereby inhibiting essential cellular processes such as DNA replication and transcription. Acts by unhooking both sides of the ICLs, forming abasic (AP) sites on both strands. AlkZ specifically repairs DNA damage induced by azinomycin B (AZB), a natural product with potent antibiotic and antitumor activities that interacts covalently with duplex DNA and forms ICLs. AlkZ thus confers self-resistance to azinomycin B, which is produced by S.sahachiroi. It may also protect target sites by protein-DNA interaction. Binds sequence non-specifically to native DNA and structure-specifically to azinomycin B-modified sites, with higher affinity to azinomycin B-modified sites and lower affinity to native DNA duplex. In vitro, also acts on monoadducts and can catalyze the excision of N7-methylguanine (7mGua) from an oligonucleotide containing N7-methyldeoxyguanosine (d7mG). Is a monofunctional DNA glycosylase that does not have lyase activity. The chain is Interstrand DNA cross-link repair glycosylase from Streptomyces sahachiroi.